The chain runs to 95 residues: MKLVFLFLLVTIPICCYASGSGCSILDEVIRGTINSTVTLHDYMKLVKPYVHDHFTANAVKQFKQCFLDQTNKTVENVGVMTEAIFNSESCQQPS.

The signal sequence occupies residues 1 to 18 (MKLVFLFLLVTIPICCYA). 2 N-linked (GlcNAc...) asparagine glycosylation sites follow: asparagine 35 and asparagine 72.

Belongs to the secretoglobin family. Lipophilin subfamily. As to quaternary structure, prostatein is composed of three different peptides called C1, C2 and C3. These form covalent C1:C3 (F) and C2:C3 (S) heterodimers whose non-covalent association forms tetrameric (C1:C3/C3:C2) prostatein molecules. As to expression, expressed at very low level in ventral prostate.

It is found in the secreted. Functionally, part of prostatein which is the major secretory glycoprotein of ventral prostate gland. Steroid-binding protein; can bind non-polar steroids, cholesterol and a group of small proline-rich peptides. The sequence is that of Secretoglobin family 2A member 1 from Rattus norvegicus (Rat).